The following is a 190-amino-acid chain: Segregation and condensation protein B (190 aa).

Belongs to the ScpB family. As to quaternary structure, homodimer. Homodimerization may be required to stabilize the binding of ScpA to the Smc head domains. Component of a cohesin-like complex composed of ScpA, ScpB and the Smc homodimer, in which ScpA and ScpB bind to the head domain of Smc. The presence of the three proteins is required for the association of the complex with DNA.

It localises to the cytoplasm. Its function is as follows. Participates in chromosomal partition during cell division. May act via the formation of a condensin-like complex containing Smc and ScpA that pull DNA away from mid-cell into both cell halves. The sequence is that of Segregation and condensation protein B from Bacillus cereus (strain ATCC 10987 / NRS 248).